Reading from the N-terminus, the 218-residue chain is MDVRTERLNELFFVYHKNLKNQSKSKYSRAVNYLKRRGFNLQDFLKVGGGVGYLQNKEWLNLPLYSFDGNLIGFLNRKVSYKKEFLYTPFNKPPSKSEAFVGLRELVIKDNSIYLVEGDFDWLAFRKAGILNSLPLCGLTISNQQVQWLKQKKIKKIFICFDNDLAGKNGAKNLKEYLTKQGFITKVIEIKAAAKDWNDLFLLNNSNWSAVLTNQLLF.

The Toprim domain maps to 111 to 193; the sequence is NSIYLVEGDF…ITKVIEIKAA (83 aa).

This is an uncharacterized protein from Mycoplasma genitalium (strain ATCC 33530 / DSM 19775 / NCTC 10195 / G37) (Mycoplasmoides genitalium).